The sequence spans 228 residues: Clathrin light chain B (228 aa).

Methionine 1 carries the post-translational modification Blocked amino end (Met). Residues 1–17 (MADDFGFFSSSESGAPE) are compositionally biased toward low complexity. The interval 1–80 (MADDFGFFSS…VNGDVFQEAN (80 aa)) is disordered. Phosphoserine occurs at positions 11 and 13. Positions 92–154 (ADRLTQEPES…QVEKNKINNR (63 aa)) are involved in binding clathrin heavy chain. The residue at position 186 (threonine 186) is a Phosphothreonine. The cysteines at positions 198 and 208 are disulfide-linked. An N6-acetyllysine modification is found at lysine 203. A Phosphoserine modification is found at serine 216.

This sequence belongs to the clathrin light chain family. As to quaternary structure, clathrin coats are formed from molecules containing 3 heavy chains and 3 light chains. Interacts (via N-terminus) with HIP1. Interacts with HIP1R.

The protein resides in the cytoplasmic vesicle membrane. Its subcellular location is the membrane. It is found in the coated pit. Functionally, clathrin is the major protein of the polyhedral coat of coated pits and vesicles. This chain is Clathrin light chain B (CLTB), found in Bos taurus (Bovine).